The primary structure comprises 875 residues: Alanine--tRNA ligase (875 aa).

4 residues coordinate Zn(2+): His564, His568, Cys666, and His670.

Belongs to the class-II aminoacyl-tRNA synthetase family. As to quaternary structure, homotetramer. It depends on Zn(2+) as a cofactor.

The protein localises to the cytoplasm. The catalysed reaction is tRNA(Ala) + L-alanine + ATP = L-alanyl-tRNA(Ala) + AMP + diphosphate. Functionally, catalyzes the attachment of alanine to tRNA(Ala) in a two-step reaction: alanine is first activated by ATP to form Ala-AMP and then transferred to the acceptor end of tRNA(Ala). Also edits incorrectly charged Ser-tRNA(Ala) and Gly-tRNA(Ala) via its editing domain. The polypeptide is Alanine--tRNA ligase (Yersinia pestis bv. Antiqua (strain Angola)).